Consider the following 181-residue polypeptide: Large ribosomal subunit protein uL10 (181 aa).

It belongs to the universal ribosomal protein uL10 family. In terms of assembly, part of the ribosomal stalk of the 50S ribosomal subunit. The N-terminus interacts with L11 and the large rRNA to form the base of the stalk. The C-terminus forms an elongated spine to which L12 dimers bind in a sequential fashion forming a multimeric L10(L12)X complex.

Forms part of the ribosomal stalk, playing a central role in the interaction of the ribosome with GTP-bound translation factors. In Trichormus variabilis (strain ATCC 29413 / PCC 7937) (Anabaena variabilis), this protein is Large ribosomal subunit protein uL10.